A 128-amino-acid chain; its full sequence is Prefoldin subunit 1 (128 aa).

Coiled coils occupy residues 17-37 and 81-115; these read MIELTGKLKQVQNQMRNKEGD and LKDSEAAVASLQTSKEYLEKQVAEVENNLRELLQQ.

The protein belongs to the prefoldin subunit beta family. Heterohexamer of two PFD-alpha type and four PFD-beta type subunits forming prefoldin co-chaperone complex. Interacts with LSM8, a specific subunit of the LSM2-8 complex, which is a core component of the spliceosome.

The protein localises to the cytoplasm. It localises to the nucleus. Functionally, binds specifically to cytosolic chaperonin (c-CPN) and transfers target proteins to it. Binds to nascent polypeptide chain and promotes folding in an environment in which there are many competing pathways for nonnative proteins. Together with other chaperonins, contribute to the regulation of gene expression by modulating the spliceosome function on pre-mRNA splicing post-transcriptionally by acting as a co-chaperone of Hsp90 to control levels of LSM8. Required for microtubules (MTs) organization and dynamicity. Involved in the process leading to microtubules dissociation in response to gibberellic acid (GA) probably due to the DELLA proteins-mediated translocation of the prefoldin co-chaperone complex from the cytoplasm to the nucleus. This is Prefoldin subunit 1 from Arabidopsis thaliana (Mouse-ear cress).